A 308-amino-acid polypeptide reads, in one-letter code: Putative S-adenosyl-L-methionine-dependent methyltransferase MAB_4585c (308 aa).

S-adenosyl-L-methionine-binding positions include Asp131 and 160–161 (DL).

This sequence belongs to the UPF0677 family.

Its function is as follows. Exhibits S-adenosyl-L-methionine-dependent methyltransferase activity. This chain is Putative S-adenosyl-L-methionine-dependent methyltransferase MAB_4585c, found in Mycobacteroides abscessus (strain ATCC 19977 / DSM 44196 / CCUG 20993 / CIP 104536 / JCM 13569 / NCTC 13031 / TMC 1543 / L948) (Mycobacterium abscessus).